The chain runs to 310 residues: D-alanine--D-alanine ligase (310 aa).

Positions 107–305 (KKVWQSAGLP…FSALVQSILA (199 aa)) constitute an ATP-grasp domain. 134–189 (EQLHCQDFVIKPALEGSSVGVSRVKNQEQLAAAIPFAGGARAKIMAEPWIVGRELT) provides a ligand contact to ATP. The Mg(2+) site is built by Asp-259, Glu-272, and Asn-274.

Belongs to the D-alanine--D-alanine ligase family. It depends on Mg(2+) as a cofactor. Mn(2+) is required as a cofactor.

The protein localises to the cytoplasm. It catalyses the reaction 2 D-alanine + ATP = D-alanyl-D-alanine + ADP + phosphate + H(+). The protein operates within cell wall biogenesis; peptidoglycan biosynthesis. Functionally, cell wall formation. This is D-alanine--D-alanine ligase from Dichelobacter nodosus (strain VCS1703A).